The primary structure comprises 201 residues: Holliday junction branch migration complex subunit RuvA (201 aa).

Positions 1-64 are domain I; that stretch reads MFAFLRGELV…EDAQQLFGFL (64 aa). The tract at residues 65 to 143 is domain II; the sequence is DEEELQLFRL…KIQPAASGKT (79 aa). The segment at 144-154 is flexible linker; it reads AGAPQALQLNE. Positions 154-201 are domain III; it reads EDALAALMTLGFPKPAAQKAISGILETSPGLSVEEVVRAALIAIHNNF.

It belongs to the RuvA family. Homotetramer. Forms an RuvA(8)-RuvB(12)-Holliday junction (HJ) complex. HJ DNA is sandwiched between 2 RuvA tetramers; dsDNA enters through RuvA and exits via RuvB. An RuvB hexamer assembles on each DNA strand where it exits the tetramer. Each RuvB hexamer is contacted by two RuvA subunits (via domain III) on 2 adjacent RuvB subunits; this complex drives branch migration. In the full resolvosome a probable DNA-RuvA(4)-RuvB(12)-RuvC(2) complex forms which resolves the HJ.

The protein resides in the cytoplasm. In terms of biological role, the RuvA-RuvB-RuvC complex processes Holliday junction (HJ) DNA during genetic recombination and DNA repair, while the RuvA-RuvB complex plays an important role in the rescue of blocked DNA replication forks via replication fork reversal (RFR). RuvA specifically binds to HJ cruciform DNA, conferring on it an open structure. The RuvB hexamer acts as an ATP-dependent pump, pulling dsDNA into and through the RuvAB complex. HJ branch migration allows RuvC to scan DNA until it finds its consensus sequence, where it cleaves and resolves the cruciform DNA. The protein is Holliday junction branch migration complex subunit RuvA of Chlorobaculum tepidum (strain ATCC 49652 / DSM 12025 / NBRC 103806 / TLS) (Chlorobium tepidum).